Here is a 380-residue protein sequence, read N- to C-terminus: uncharacterized protein (380 aa).

Residues 256-301 (DKEEKIQKSYQYQTELITELQGRIAELEKENQSLKENVKEPETSKP) adopt a coiled-coil conformation.

This is an uncharacterized protein from Pasteurella multocida (strain Pm70).